A 75-amino-acid chain; its full sequence is Endogenous retrovirus group K member 5 Np9 protein (75 aa).

A disordered region spans residues 22-43 (TAPKRQRPSRTGHDDDGGFVEK). Positions 32-43 (TGHDDDGGFVEK) are enriched in basic and acidic residues.

It localises to the nucleus. Its function is as follows. May possess a function in tumorigenesis. The sequence is that of Endogenous retrovirus group K member 5 Np9 protein (ERVK-5) from Homo sapiens (Human).